Consider the following 154-residue polypeptide: Ribosome maturation factor RimP (154 aa).

Belongs to the RimP family.

It is found in the cytoplasm. In terms of biological role, required for maturation of 30S ribosomal subunits. In Carboxydothermus hydrogenoformans (strain ATCC BAA-161 / DSM 6008 / Z-2901), this protein is Ribosome maturation factor RimP.